A 172-amino-acid polypeptide reads, in one-letter code: C-phycocyanin beta subunit (172 aa).

At Asn-72 the chain carries N4-methylasparagine. (2R,3E)-phycocyanobilin is bound by residues Cys-82 and Cys-153.

It belongs to the phycobiliprotein family. In terms of assembly, the alpha and beta subunits exhibit high affinity for one another and form heterodimers. These heterodimers form heterohexamers of 3 alpha and 3 beta subunits which, in turn, aggregate into a heterododecamer consisting of 2 heterohexamers. Post-translationally, contains two covalently linked bilin chromophores.

The protein resides in the cellular thylakoid membrane. Its function is as follows. Light-harvesting photosynthetic bile pigment-protein from the phycobiliprotein complex (phycobilisome, PBS). Phycocyanin is the major phycobiliprotein in the PBS rod. This chain is C-phycocyanin beta subunit (cpcB), found in Arthrospira platensis (Spirulina platensis).